Consider the following 141-residue polypeptide: Large ribosomal subunit protein uL11 (141 aa).

This sequence belongs to the universal ribosomal protein uL11 family. In terms of assembly, part of the ribosomal stalk of the 50S ribosomal subunit. Interacts with L10 and the large rRNA to form the base of the stalk. L10 forms an elongated spine to which L12 dimers bind in a sequential fashion forming a multimeric L10(L12)X complex. One or more lysine residues are methylated.

In terms of biological role, forms part of the ribosomal stalk which helps the ribosome interact with GTP-bound translation factors. This chain is Large ribosomal subunit protein uL11, found in Geobacillus sp. (strain WCH70).